A 170-amino-acid chain; its full sequence is MKTQRDGPSLGRWSLLLLLLGLTMPLAVIGRVLSYQEAVLRAVDGLNQRSSDANLYRLLNLDPRPTMDGDPDTPKPVSFTVKETVCPRTIQRSPEECDFKEDGLVKWCVGTVTLNQAKDSFDISCDKDKRKVARLGGILRKAGEKIGGGLKKIGQKIKDFFGKLAPRTES.

An N-terminal signal peptide occupies residues 1–30 (MKTQRDGPSLGRWSLLLLLLGLTMPLAVIG). A propeptide spans 31-131 (RVLSYQEAVL…DISCDKDKRK (101 aa)) (cathelin-like domain (CLD)). The cathelin-like domain (CLD) stretch occupies residues 31-131 (RVLSYQEAVL…DISCDKDKRK (101 aa)). 2 disulfide bridges follow: Cys86–Cys97 and Cys108–Cys125. Residues 150–162 (LKKIGQKIKDFFG) are active core.

The protein belongs to the cathelicidin family. In terms of assembly, monomer, homodimer or homotrimer (in vitro). Oligomerizes as tetra- or hexamer in solution (in vitro). Post-translationally, proteolytically cleaved by proteinase PRTN3 into antibacterial peptide LL-37. Proteolytically cleaved by cathepsin CTSG and neutrophil elastase ELANE. Resistant to proteolytic degradation in solution, and when bound to both zwitterionic (mimicking mammalian membranes) and negatively charged membranes (mimicking bacterial membranes). In terms of processing, after secretion onto the skin surface, the CAMP gene product is processed by a serine protease-dependent mechanism into multiple novel antimicrobial peptides distinct from and shorter than cathelicidin LL-37. These peptides show enhanced antimicrobial action, acquiring the ability to kill skin pathogens such as S.aureus, E.coli and C.albicans. These peptides have lost the ability to stimulate CXCL8/IL8 release from keratinocytes. The peptides act synergistically, killing bacteria at lower concentrations when present together, and maintain activity at increased salt condition.

The protein resides in the secreted. It is found in the vesicle. Its function is as follows. Antimicrobial protein that is an integral component of the innate immune system. Binds to bacterial lipopolysaccharides (LPS). Acts via neutrophil N-formyl peptide receptors to enhance the release of CXCL2. Postsecretory processing generates multiple cathelicidin antimicrobial peptides with various lengths which act as a topical antimicrobial defense in sweat on skin. The unprocessed precursor form, cathelicidin antimicrobial peptide, inhibits the growth of Gram-negative E.coli and E.aerogenes with efficiencies comparable to that of the mature peptide LL-37 (in vitro). Antimicrobial peptide that is an integral component of the innate immune system. Binds to bacterial lipopolysaccharides (LPS). Causes membrane permeabilization by forming transmembrane pores (in vitro). Causes lysis of E.coli. Exhibits antimicrobial activity against Gram-negative bacteria such as P.aeruginosa, S.typhimurium, E.aerogenes, E.coli and P.syringae, Gram-positive bacteria such as L.monocytogenes, S.epidermidis, S.pyogenes and S.aureus, as well as vancomycin-resistant enterococci (in vitro). Exhibits antimicrobial activity against methicillin-resistant S.aureus, P.mirabilis, and C.albicans in low-salt media, but not in media containing 100 mM NaCl (in vitro). Forms chiral supramolecular assemblies with quinolone signal (PQS) molecules of P.aeruginosa, which may lead to interference of bacterial quorum signaling and perturbance of bacterial biofilm formation. May form supramolecular fiber-like assemblies on bacterial membranes. Induces cytokine and chemokine producation as well as TNF/TNFA and CSF2/GMCSF production in normal human keratinocytes. Exhibits hemolytic activity against red blood cells. In terms of biological role, exhibits antimicrobial activity against E.coli and B.megaterium (in vitro). The sequence is that of Cathelicidin antimicrobial peptide from Saguinus oedipus (Cotton-top tamarin).